The sequence spans 115 residues: Transmembrane protein 218 (115 aa).

Helical transmembrane passes span 5 to 25 (VLGV…VLLL), 38 to 58 (FSIV…LLFP), and 81 to 101 (YVLL…LLTH).

This sequence belongs to the TMEM218 family. In terms of assembly, interacts with TMEM67.

Its subcellular location is the membrane. It localises to the cell projection. The protein resides in the cilium. May be involved in ciliary biogenesis or function. The protein is Transmembrane protein 218 (Tmem218) of Mus musculus (Mouse).